Here is a 443-residue protein sequence, read N- to C-terminus: Chorionicgonadotropic hormone-like protein (443 aa).

The segment covering 263–286 has biased composition (basic residues); sequence RCAGRPCPRRHRRPCNASKSHRPM. Residues 263-292 are disordered; it reads RCAGRPCPRRHRRPCNASKSHRPMRMQQRD.

The protein to mammalian CGHB.

It localises to the secreted. The protein localises to the cell wall. Its function is as follows. Cell wall protein that resembles the beta subunit of human chorionic gonadotropin. Stimulates growth and change in morphology. The chain is Chorionicgonadotropic hormone-like protein (xcg) from Stenotrophomonas maltophilia (Pseudomonas maltophilia).